The sequence spans 120 residues: Large ribosomal subunit protein bL12 (120 aa).

This sequence belongs to the bacterial ribosomal protein bL12 family. As to quaternary structure, homodimer. Part of the ribosomal stalk of the 50S ribosomal subunit. Forms a multimeric L10(L12)X complex, where L10 forms an elongated spine to which 2 to 4 L12 dimers bind in a sequential fashion. Binds GTP-bound translation factors.

In terms of biological role, forms part of the ribosomal stalk which helps the ribosome interact with GTP-bound translation factors. Is thus essential for accurate translation. The chain is Large ribosomal subunit protein bL12 from Lactobacillus helveticus (strain DPC 4571).